A 440-amino-acid polypeptide reads, in one-letter code: UDP-N-acetylmuramoylalanine--D-glutamate ligase (440 aa).

Residue 113 to 119 coordinates ATP; the sequence is GTNGKST.

This sequence belongs to the MurCDEF family.

The protein localises to the cytoplasm. It carries out the reaction UDP-N-acetyl-alpha-D-muramoyl-L-alanine + D-glutamate + ATP = UDP-N-acetyl-alpha-D-muramoyl-L-alanyl-D-glutamate + ADP + phosphate + H(+). Its pathway is cell wall biogenesis; peptidoglycan biosynthesis. In terms of biological role, cell wall formation. Catalyzes the addition of glutamate to the nucleotide precursor UDP-N-acetylmuramoyl-L-alanine (UMA). In Buchnera aphidicola subsp. Acyrthosiphon pisum (strain Tuc7), this protein is UDP-N-acetylmuramoylalanine--D-glutamate ligase.